A 150-amino-acid chain; its full sequence is Flagellar assembly factor FliW (150 aa).

Belongs to the FliW family. As to quaternary structure, interacts with translational regulator CsrA and flagellin(s).

It localises to the cytoplasm. Acts as an anti-CsrA protein, binds CsrA and prevents it from repressing translation of its target genes, one of which is flagellin. Binds to flagellin and participates in the assembly of the flagellum. This Leptospira borgpetersenii serovar Hardjo-bovis (strain JB197) protein is Flagellar assembly factor FliW.